Reading from the N-terminus, the 249-residue chain is Sugar fermentation stimulation protein homolog (249 aa).

This sequence belongs to the SfsA family.

The polypeptide is Sugar fermentation stimulation protein homolog (Rhizobium rhizogenes (strain K84 / ATCC BAA-868) (Agrobacterium radiobacter)).